The primary structure comprises 307 residues: Tropinone reductase homolog At2g29340 (307 aa).

13–37 (LVTGGASGIGYAIVEELAGFGARIH) contacts NADP(+). Ser146 contacts substrate. Tyr159 functions as the Proton acceptor in the catalytic mechanism.

This sequence belongs to the short-chain dehydrogenases/reductases (SDR) family. SDR65C subfamily.

The sequence is that of Tropinone reductase homolog At2g29340 from Arabidopsis thaliana (Mouse-ear cress).